Here is an 803-residue protein sequence, read N- to C-terminus: Protein translocase subunit SecA (803 aa).

Residues Gln100, Gly118–Thr122, and Asp508 each bind ATP.

Belongs to the SecA family. As to quaternary structure, monomer and homodimer. Part of the essential Sec protein translocation apparatus which comprises SecA, SecYEG and auxiliary proteins SecDF. Other proteins may also be involved.

The protein localises to the cell membrane. It is found in the cytoplasm. The catalysed reaction is ATP + H2O + cellular proteinSide 1 = ADP + phosphate + cellular proteinSide 2.. Part of the Sec protein translocase complex. Interacts with the SecYEG preprotein conducting channel. Has a central role in coupling the hydrolysis of ATP to the transfer of proteins into and across the cell membrane, serving as an ATP-driven molecular motor driving the stepwise translocation of polypeptide chains across the membrane. The polypeptide is Protein translocase subunit SecA (Leuconostoc mesenteroides subsp. mesenteroides (strain ATCC 8293 / DSM 20343 / BCRC 11652 / CCM 1803 / JCM 6124 / NCDO 523 / NBRC 100496 / NCIMB 8023 / NCTC 12954 / NRRL B-1118 / 37Y)).